A 589-amino-acid chain; its full sequence is MTISTDRPAPVSSWRTYRRLLAFAKPYRLLLVAALIAALIEAAGTTGFLALMKPITDETFIYKNAEVSRWLPVQIILLFVVRGVAGYITDMAMGKSARSIARDLRIKVMAKYLRLPGSRFDSEPVPSMLIRLGSDSDQVAQAAVDAVKVMIQQSLQVIGALALMLWHSWQVTLTILVLAPVLAWVMDKVARRYRRISHSIQESGAQLLQAADQTLSSHQEVKIYGAQQTEMERYGALANRNLRLAMKVESTRGISTATVQMIGAIGLSALLFVAGAQALAGRLTAGDFVVLMTSMLTIIPGLKQLTNVQNMVQRGLASAERLFSVLDSPDEPDQGTVPLTRAKGLIEFRDVTARYPGQVNPALADVSFVAQPGTVTAIVGRSGSGKSSLIKLIPRFYEAEAGQILLDGHPVQAYALADLRRQIALVGQQVMLFDGSIADNVAFGEMRNADAGQLERAILGANAMEFVAQLPEGLQSHVGTKGGRLSGGQRQRLAIARAMLKDAPVLILDEATAALDNESERLVQDALHKLMPDRTTLVIAHRLSTIEHADQVLVMDQGRIVERGTHHQLLAQGGLYSHLHGMQFRERQA.

Transmembrane regions (helical) follow at residues 29 to 49 (LLLVAALIAALIEAAGTTGFL), 70 to 90 (WLPVQIILLFVVRGVAGYITD), 157 to 177 (VIGALALMLWHSWQVTLTILV), 261 to 281 (MIGAIGLSALLFVAGAQALAG), and 283 to 303 (LTAGDFVVLMTSMLTIIPGLK). The ABC transmembrane type-1 domain maps to 32-314 (VAALIAALIE…LTNVQNMVQR (283 aa)). Residues 346–582 (IEFRDVTARY…GGLYSHLHGM (237 aa)) enclose the ABC transporter domain. 380–387 (GRSGSGKS) serves as a coordination point for ATP.

It belongs to the ABC transporter superfamily. Lipid exporter (TC 3.A.1.106) family. As to quaternary structure, homodimer.

It is found in the cell inner membrane. It catalyses the reaction ATP + H2O + lipid A-core oligosaccharideSide 1 = ADP + phosphate + lipid A-core oligosaccharideSide 2.. Its function is as follows. Involved in lipopolysaccharide (LPS) biosynthesis. Translocates lipid A-core from the inner to the outer leaflet of the inner membrane. Transmembrane domains (TMD) form a pore in the inner membrane and the ATP-binding domain (NBD) is responsible for energy generation. This chain is ATP-dependent lipid A-core flippase, found in Xanthomonas euvesicatoria pv. vesicatoria (strain 85-10) (Xanthomonas campestris pv. vesicatoria).